We begin with the raw amino-acid sequence, 568 residues long: 2-succinyl-5-enolpyruvyl-6-hydroxy-3-cyclohexene-1-carboxylate synthase (568 aa).

Belongs to the TPP enzyme family. MenD subfamily. As to quaternary structure, homodimer. Mg(2+) is required as a cofactor. Mn(2+) serves as cofactor. The cofactor is thiamine diphosphate.

It catalyses the reaction isochorismate + 2-oxoglutarate + H(+) = 5-enolpyruvoyl-6-hydroxy-2-succinyl-cyclohex-3-ene-1-carboxylate + CO2. The protein operates within quinol/quinone metabolism; 1,4-dihydroxy-2-naphthoate biosynthesis; 1,4-dihydroxy-2-naphthoate from chorismate: step 2/7. It participates in quinol/quinone metabolism; menaquinone biosynthesis. Catalyzes the thiamine diphosphate-dependent decarboxylation of 2-oxoglutarate and the subsequent addition of the resulting succinic semialdehyde-thiamine pyrophosphate anion to isochorismate to yield 2-succinyl-5-enolpyruvyl-6-hydroxy-3-cyclohexene-1-carboxylate (SEPHCHC). The chain is 2-succinyl-5-enolpyruvyl-6-hydroxy-3-cyclohexene-1-carboxylate synthase from Actinobacillus pleuropneumoniae serotype 3 (strain JL03).